The following is a 286-amino-acid chain: 3-hydroxyanthranilate 3,4-dioxygenase (286 aa).

The domain A (catalytic) stretch occupies residues 1–160; that stretch reads MERCVRVKSW…SEQYRTGKPN (160 aa). An O2-binding site is contributed by R43. Fe cation contacts are provided by H47, E53, and H91. Residue E53 coordinates substrate. Residues R95 and E105 each coordinate substrate. The linker stretch occupies residues 161-177; sequence PDQLLKEPPFPLSTRSV. The tract at residues 178–286 is domain B; it reads MEPMSLKAWL…QDPACKKPLG (109 aa).

The protein belongs to the 3-HAO family. In terms of assembly, monomer. Fe(2+) serves as cofactor.

It localises to the cytoplasm. The protein localises to the cytosol. It carries out the reaction 3-hydroxyanthranilate + O2 = (2Z,4Z)-2-amino-3-carboxymuconate 6-semialdehyde. Its pathway is cofactor biosynthesis; NAD(+) biosynthesis; quinolinate from L-kynurenine: step 3/3. In terms of biological role, catalyzes the oxidative ring opening of 3-hydroxyanthranilate to 2-amino-3-carboxymuconate semialdehyde, which spontaneously cyclizes to quinolinate. The sequence is that of 3-hydroxyanthranilate 3,4-dioxygenase (Haao) from Rattus norvegicus (Rat).